A 556-amino-acid chain; its full sequence is Formate--tetrahydrofolate ligase (556 aa).

ATP is bound at residue 65 to 72; that stretch reads TPAGEGKS.

The protein belongs to the formate--tetrahydrofolate ligase family.

It carries out the reaction (6S)-5,6,7,8-tetrahydrofolate + formate + ATP = (6R)-10-formyltetrahydrofolate + ADP + phosphate. It functions in the pathway one-carbon metabolism; tetrahydrofolate interconversion. The sequence is that of Formate--tetrahydrofolate ligase from Streptococcus mutans serotype c (strain ATCC 700610 / UA159).